Reading from the N-terminus, the 293-residue chain is Small ribosomal subunit biogenesis GTPase RsgA (293 aa).

A CP-type G domain is found at 63 to 223 (KNELVRPPIA…VADTPGFSSL (161 aa)). GTP is bound by residues 112 to 115 (SKMD) and 166 to 174 (GQSGVGKSS). Residues cysteine 247, cysteine 252, histidine 254, and cysteine 260 each coordinate Zn(2+).

This sequence belongs to the TRAFAC class YlqF/YawG GTPase family. RsgA subfamily. In terms of assembly, monomer. Associates with 30S ribosomal subunit, binds 16S rRNA. Zn(2+) serves as cofactor.

It is found in the cytoplasm. Functionally, one of several proteins that assist in the late maturation steps of the functional core of the 30S ribosomal subunit. Helps release RbfA from mature subunits. May play a role in the assembly of ribosomal proteins into the subunit. Circularly permuted GTPase that catalyzes slow GTP hydrolysis, GTPase activity is stimulated by the 30S ribosomal subunit. The sequence is that of Small ribosomal subunit biogenesis GTPase RsgA from Bacillus cereus (strain ATCC 14579 / DSM 31 / CCUG 7414 / JCM 2152 / NBRC 15305 / NCIMB 9373 / NCTC 2599 / NRRL B-3711).